A 484-amino-acid polypeptide reads, in one-letter code: 1,3-beta-glucanosyltransferase GAS5 (484 aa).

A signal peptide spans 1 to 19 (MLLRSLTSAFVLSAGLAQA). N-linked (GlcNAc...) asparagine glycosylation is found at N24 and N60. A disulfide bond links C71 and C100. The (1,3-beta-D-glucosyl)n site is built by Y89, N159, and E160. The Proton donor role is filled by E160. N166 is a glycosylation site (N-linked (GlcNAc...) asparagine). The (1,3-beta-D-glucosyl)n site is built by D201 and R206. 2 disulfide bridges follow: C215–C348 and C234–C265. Catalysis depends on E262, which acts as the Nucleophile. Y295 contacts (1,3-beta-D-glucosyl)n. N-linked (GlcNAc...) asparagine glycosylation is found at N299, N344, and N359. The interval 383–462 (TGIATQQSCD…SSQSSSKSKG (80 aa)) is disordered. The segment covering 394-404 (KDDDDEEDDDT) has biased composition (acidic residues). The segment covering 405-462 (SSSSSSSSSSSSSASSSSESSSSTSKASSSSPSASETSLLKSAASATSSSQSSSKSKG) has biased composition (low complexity). The GPI-anchor amidated glycine moiety is linked to residue G462. A propeptide spans 463–484 (AAGIIEIPLIFRALAELYNLVL) (removed in mature form).

The protein belongs to the glycosyl hydrolase 72 family. In terms of processing, the GPI-anchor is attached to the protein in the endoplasmic reticulum and serves to target the protein to the cell surface. There, the glucosamine-inositol phospholipid moiety is cleaved off and the GPI-modified mannoprotein is covalently attached via its lipidless GPI glycan remnant to the 1,6-beta-glucan of the outer cell wall layer.

The protein localises to the secreted. It is found in the cell wall. Its subcellular location is the membrane. Its function is as follows. Splits internally a 1,3-beta-glucan molecule and transfers the newly generated reducing end (the donor) to the non-reducing end of another 1,3-beta-glucan molecule (the acceptor) forming a 1,3-beta linkage, resulting in the elongation of 1,3-beta-glucan chains in the cell wall. Involved in cell wall biosynthesis and morphogenesis. In Saccharomyces cerevisiae (strain ATCC 204508 / S288c) (Baker's yeast), this protein is 1,3-beta-glucanosyltransferase GAS5 (GAS5).